Reading from the N-terminus, the 137-residue chain is Peptide methionine sulfoxide reductase MsrB (137 aa).

In terms of domain architecture, MsrB spans 7–129 (PTENIEKLTD…NSASLNFVDD (123 aa)). Cys46, Cys49, Cys95, and Cys98 together coordinate Zn(2+). Catalysis depends on Cys118, which acts as the Nucleophile.

This sequence belongs to the MsrB Met sulfoxide reductase family. The cofactor is Zn(2+).

The enzyme catalyses L-methionyl-[protein] + [thioredoxin]-disulfide + H2O = L-methionyl-(R)-S-oxide-[protein] + [thioredoxin]-dithiol. The chain is Peptide methionine sulfoxide reductase MsrB from Yersinia enterocolitica serotype O:8 / biotype 1B (strain NCTC 13174 / 8081).